A 67-amino-acid polypeptide reads, in one-letter code: Sporulation protein 24 (67 aa).

A phosphoserine mark is found at serine 24 and serine 32.

Phosphorylated during meiosis. During meiosis, exists in both unphosphorylated and phosphorylated forms with the highest degree of phosphorylation occurring in mid-meiosis.

The protein resides in the prospore membrane. Its function is as follows. Required for efficient sporulation. In Saccharomyces cerevisiae (strain ATCC 204508 / S288c) (Baker's yeast), this protein is Sporulation protein 24.